A 1049-amino-acid polypeptide reads, in one-letter code: Cellulose synthase A catalytic subunit 4 [UDP-forming] (1049 aa).

The Cytoplasmic segment spans residues Met1–Arg215. Positions 23, 26, 42, 45, 50, 53, 65, and 68 each coordinate Zn(2+). The RING-type; degenerate zinc finger occupies Cys23–Asn69. The disordered stretch occupies residues Lys76–Asn98. Acidic residues predominate over residues Asp84 to Glu96. Ser135 bears the Phosphoserine mark. A helical transmembrane segment spans residues Ile216 to Pro236. Residues Ala237 to Asp239 are Extracellular-facing. The chain crosses the membrane as a helical span at residues Ala240–Leu260. At Asp261–Ser831 the chain is on the cytoplasmic side. Residues Ser299, Lys305, Glu306, and Asp335 each coordinate UDP-alpha-D-glucose. Residue Asp335 is part of the active site. Residues Val389–Lys416 adopt a coiled-coil conformation. Lys476 provides a ligand contact to UDP-alpha-D-glucose. Positions 477 and 501 each coordinate Mn(2+). The active site involves Asp748. A helical transmembrane segment spans residues Ile832–Ile852. Residues Pro853–Asn857 lie on the Extracellular side of the membrane. A helical transmembrane segment spans residues Phe858 to Leu878. Residues Arg879 to Trp895 are Cytoplasmic-facing. The chain crosses the membrane as a helical span at residues Val896–Phe916. Over Gly917–Thr945 the chain is Extracellular. An N-linked (GlcNAc...) asparagine glycan is attached at Asn921. A helical membrane pass occupies residues Thr946–Val966. Residues Ser967 to Trp977 are Cytoplasmic-facing. The helical transmembrane segment at Gly978–Leu998 threads the bilayer. Over Lys999–Arg1007 the chain is Extracellular. The chain crosses the membrane as a helical span at residues Thr1008–Val1028. At Arg1029 to Cys1049 the chain is on the cytoplasmic side.

It belongs to the glycosyltransferase 2 family. Plant cellulose synthase subfamily. Interacts with CESA7 and CESA8. Assembly with CESA7 and CESA8 is required for functional complex and localization in secondary cell wall deposition sites. Interacts with STL1 and STL2, but not with GOT1. It depends on Zn(2+) as a cofactor. Mn(2+) serves as cofactor. S-acylated. As to expression, confined to secondary cell wall developing tissues such as xylems and interfascicular regions. Expressed in roots, hypocotyls, leaves, inflorescences and flowers.

Its subcellular location is the cell membrane. The catalysed reaction is [(1-&gt;4)-beta-D-glucosyl](n) + UDP-alpha-D-glucose = [(1-&gt;4)-beta-D-glucosyl](n+1) + UDP + H(+). It participates in glycan metabolism; plant cellulose biosynthesis. Its function is as follows. Catalytic subunit of cellulose synthase terminal complexes ('rosettes'), required for beta-1,4-glucan microfibril crystallization, a major mechanism of the cell wall formation. Involved in the secondary cell wall formation. Required for the xylem cell wall thickening. This is Cellulose synthase A catalytic subunit 4 [UDP-forming] from Arabidopsis thaliana (Mouse-ear cress).